A 466-amino-acid chain; its full sequence is Asparagine--tRNA ligase (466 aa).

This sequence belongs to the class-II aminoacyl-tRNA synthetase family. Homodimer.

Its subcellular location is the cytoplasm. The catalysed reaction is tRNA(Asn) + L-asparagine + ATP = L-asparaginyl-tRNA(Asn) + AMP + diphosphate + H(+). This chain is Asparagine--tRNA ligase, found in Shewanella pealeana (strain ATCC 700345 / ANG-SQ1).